The following is a 77-amino-acid chain: Probable [Fe-S]-dependent transcriptional repressor (77 aa).

Iron-sulfur cluster is bound by residues C54, C59, C62, and C68.

It belongs to the FeoC family.

Its function is as follows. May function as a transcriptional regulator that controls feoABC expression. This Proteus mirabilis (strain HI4320) protein is Probable [Fe-S]-dependent transcriptional repressor.